The following is a 68-amino-acid chain: Alpha-conotoxin Lp1.4 (68 aa).

The first 21 residues, 1 to 21 (MGMRMMSIMFMLVVLATTVVS), serve as a signal peptide directing secretion. Residues 22–48 (FTSDRALDAMNAAASKKASRLIALAVR) constitute a propeptide that is removed on maturation. 2 cysteine pairs are disulfide-bonded: C50–C56 and C51–C64. The interval 52 to 54 (SHP) is ser-Xaa-Pro motif, crucial for potent interaction with nAChR. D65 bears the Aspartic acid 1-amide mark.

This sequence belongs to the conotoxin A superfamily. As to expression, expressed by the venom duct.

It is found in the secreted. Alpha-conotoxins act on postsynaptic membranes, they bind to the nicotinic acetylcholine receptors (nAChR) and thus inhibit them. This toxin inhibits mouse muscle alpha-1-beta-1-gamma-delta (CHRNA1-CHRNB1-CHRNG-CHRND), and weakly rat neuronal alpha-6/alpha-3-beta-2 (CHRNA6/CHRNA3-CHRNB2). In Conus leopardus (Leopard cone), this protein is Alpha-conotoxin Lp1.4.